Reading from the N-terminus, the 168-residue chain is Peptide deformylase (168 aa).

Cys92 and His134 together coordinate Fe cation. Glu135 is a catalytic residue. His138 contributes to the Fe cation binding site.

This sequence belongs to the polypeptide deformylase family. Requires Fe(2+) as cofactor.

The enzyme catalyses N-terminal N-formyl-L-methionyl-[peptide] + H2O = N-terminal L-methionyl-[peptide] + formate. Its function is as follows. Removes the formyl group from the N-terminal Met of newly synthesized proteins. Requires at least a dipeptide for an efficient rate of reaction. N-terminal L-methionine is a prerequisite for activity but the enzyme has broad specificity at other positions. This chain is Peptide deformylase, found in Stutzerimonas stutzeri (strain A1501) (Pseudomonas stutzeri).